Consider the following 352-residue polypeptide: Biotin synthase (352 aa).

The Radical SAM core domain occupies 44-262 (NRVQVSTLLS…LAVARILMPK (219 aa)). Cysteine 59, cysteine 63, and cysteine 66 together coordinate [4Fe-4S] cluster. 4 residues coordinate [2Fe-2S] cluster: cysteine 103, cysteine 134, cysteine 194, and arginine 266.

Belongs to the radical SAM superfamily. Biotin synthase family. Homodimer. It depends on [4Fe-4S] cluster as a cofactor. The cofactor is [2Fe-2S] cluster.

It carries out the reaction (4R,5S)-dethiobiotin + (sulfur carrier)-SH + 2 reduced [2Fe-2S]-[ferredoxin] + 2 S-adenosyl-L-methionine = (sulfur carrier)-H + biotin + 2 5'-deoxyadenosine + 2 L-methionine + 2 oxidized [2Fe-2S]-[ferredoxin]. It functions in the pathway cofactor biosynthesis; biotin biosynthesis; biotin from 7,8-diaminononanoate: step 2/2. In terms of biological role, catalyzes the conversion of dethiobiotin (DTB) to biotin by the insertion of a sulfur atom into dethiobiotin via a radical-based mechanism. In Pseudomonas entomophila (strain L48), this protein is Biotin synthase.